The sequence spans 1037 residues: Probable serine/threonine-protein kinase KCC4 (1037 aa).

The 265-residue stretch at 21-285 (WKLGETLGFG…IRDILSHPLL (265 aa)) folds into the Protein kinase domain. Residues 27 to 35 (LGFGSTGKV) and K50 each bind ATP. D152 serves as the catalytic Proton acceptor. The span at 372 to 387 (NKKNRNKIKKTKKNKR) shows a compositional bias: basic residues. Residues 372-494 (NKKNRNKIKK…MPNTKRSSLT (123 aa)) form a disordered region. The segment covering 388-404 (SSTLSSSSSLLLNNRSI) has biased composition (low complexity). S396 is modified (phosphoserine). Residues 408–427 (PRRRTSKRHSREFSSSRKRS) are compositionally biased toward basic residues. A compositionally biased stretch (polar residues) spans 453–465 (NVASANTQATPSG). Residues 469-480 (PHKRNSKKRSSK) show a composition bias toward basic residues. A compositionally biased stretch (low complexity) spans 481-494 (RLSYMPNTKRSSLT). Phosphoserine occurs at positions 675, 707, 777, 822, 825, and 871. Disordered stretches follow at residues 746 to 804 (LIKE…DFPQ), 810 to 829 (QEYD…KSAE), and 861 to 918 (TLPS…TVKK). The segment covering 861–873 (TLPSLTSNNSSVG) has biased composition (polar residues). Residues 879-888 (GAEKGTESEK) are compositionally biased toward basic and acidic residues.

Belongs to the protein kinase superfamily. CAMK Ser/Thr protein kinase family. NIM1 subfamily. Interacts with septin proteins, primarily with CDC11. Interacts with SWE1 and NAP1.

It is found in the bud neck. It catalyses the reaction L-seryl-[protein] + ATP = O-phospho-L-seryl-[protein] + ADP + H(+). It carries out the reaction L-threonyl-[protein] + ATP = O-phospho-L-threonyl-[protein] + ADP + H(+). Involved in regulation of bud growth during cell cycle and in septin organization. Plays a role in cell wall synthesis. The protein is Probable serine/threonine-protein kinase KCC4 (KCC4) of Saccharomyces cerevisiae (strain ATCC 204508 / S288c) (Baker's yeast).